Here is a 276-residue protein sequence, read N- to C-terminus: Adenylate kinase (276 aa).

Glycine 50 to threonine 55 is a binding site for ATP. The NMP stretch occupies residues alanine 70 to valine 99. AMP is bound by residues threonine 71, arginine 76, glycine 97–valine 99, glycine 126–arginine 129, and glutamine 133. Residues glycine 167–aspartate 204 form an LID region. ATP-binding positions include arginine 168 and serine 177–tyrosine 178. AMP contacts are provided by arginine 201 and arginine 212. Glutamine 240 serves as a coordination point for ATP.

This sequence belongs to the adenylate kinase family. AK2 subfamily. Monomer.

It is found in the cytoplasm. The protein resides in the cytosol. Its subcellular location is the mitochondrion intermembrane space. It catalyses the reaction AMP + ATP = 2 ADP. In terms of biological role, catalyzes the reversible transfer of the terminal phosphate group between ATP and AMP. Plays an important role in cellular energy homeostasis and in adenine nucleotide metabolism. Adenylate kinase activity is critical for regulation of the phosphate utilization and the AMP de novo biosynthesis pathways. This Pyricularia oryzae (strain 70-15 / ATCC MYA-4617 / FGSC 8958) (Rice blast fungus) protein is Adenylate kinase.